A 382-amino-acid polypeptide reads, in one-letter code: Mannitol-1-phosphate 5-dehydrogenase (382 aa).

3-14 (ALHFGAGNIGRG) lines the NAD(+) pocket.

This sequence belongs to the mannitol dehydrogenase family.

The catalysed reaction is D-mannitol 1-phosphate + NAD(+) = beta-D-fructose 6-phosphate + NADH + H(+). The protein is Mannitol-1-phosphate 5-dehydrogenase of Klebsiella pneumoniae (strain 342).